A 747-amino-acid polypeptide reads, in one-letter code: Polyribonucleotide nucleotidyltransferase (747 aa).

Mg(2+) is bound by residues Asp487 and Asp493. The KH domain maps to 554–613 (PSTTTIKIDKDKIRDVIGPGGKVIKEICETSDAKIDISDDGTVSVYASDRDKLKVALDKI). The 69-residue stretch at 623–691 (GEIFNGTVMK…NKGKAKLTIK (69 aa)) folds into the S1 motif domain. The segment at 691–747 (KNADKDKSSNNPKQKNNVNNSKENSEPERRDSSKKRAWNEDNNSDTTEVITERKYFN) is disordered. Residues 699 to 712 (SNNPKQKNNVNNSK) show a composition bias toward low complexity. Residues 730-739 (EDNNSDTTEV) show a composition bias toward polar residues.

Belongs to the polyribonucleotide nucleotidyltransferase family. Mg(2+) serves as cofactor.

Its subcellular location is the cytoplasm. It carries out the reaction RNA(n+1) + phosphate = RNA(n) + a ribonucleoside 5'-diphosphate. Functionally, involved in mRNA degradation. Catalyzes the phosphorolysis of single-stranded polyribonucleotides processively in the 3'- to 5'-direction. The sequence is that of Polyribonucleotide nucleotidyltransferase from Rickettsia akari (strain Hartford).